The following is a 1259-amino-acid chain: Trafficking protein particle complex II-specific subunit 130 homolog (1259 aa).

Ala2 carries the N-acetylalanine modification. The interval 479 to 526 is disordered; that stretch reads GNIPEMFDGRPSFTEGSGLEASPRTPSSLKVQAPPMSRTNSSPGNFES.

This sequence belongs to the TMEM1 family. As to quaternary structure, part of the multisubunit TRAPP (transport protein particle) II complex composed of BET3, BET5, TRS20, TRS23, TRS31, TRS33, TRS65, TRS85, TRS120 and TRS130.

The protein localises to the golgi apparatus. Its subcellular location is the trans-Golgi network. It localises to the early endosome. In terms of biological role, specific subunit of the TRAPP II complex, a highly conserved vesicle tethering complex that is required for the proper transport of proteins in post-Golgi trafficking pathways to the growing cell plate in mitotic active cells. Required for the polarized and selective transport of PIN2, but not PIN1, to the plasma membrane. Not required for ER-to-Golgi as well as biosynthetic and endocytic vacuolar transport. The chain is Trafficking protein particle complex II-specific subunit 130 homolog from Arabidopsis thaliana (Mouse-ear cress).